Consider the following 193-residue polypeptide: Bcl-2-binding component 3 (193 aa).

2 disordered regions span residues 1-32 (MARA…RLMP) and 71-131 (ALGG…VEEE). S10 is modified (phosphoserine). The short motif at 137 to 151 (IGAQLRRMADDLNAQ) is the BH3 element.

This sequence belongs to the Bcl-2 family. Interacts with MCL1 and BCL2A1. Interacts (via BH3 domain) with BCL2 and BCL2L1/BCL-XL. Interacts (via BH3 domain) with NOL3/ARC (via CARD domain); this interaction prevents BBC3 association with BCL2 and results in CASP8 activation.

The protein resides in the mitochondrion. Essential mediator of p53/TP53-dependent and p53/TP53-independent apoptosis. Promotes partial unfolding of BCL2L1 and dissociation of BCL2L1 from p53/TP53, releasing the bound p53/TP53 to induce apoptosis. Regulates ER stress-induced neuronal apoptosis. In Rattus norvegicus (Rat), this protein is Bcl-2-binding component 3 (Bbc3).